Reading from the N-terminus, the 560-residue chain is Dihydroxy-acid dehydratase (560 aa).

Position 78 (aspartate 78) interacts with Mg(2+). Residue cysteine 119 coordinates [2Fe-2S] cluster. Aspartate 120 and lysine 121 together coordinate Mg(2+). Position 121 is an N6-carboxylysine (lysine 121). Cysteine 192 provides a ligand contact to [2Fe-2S] cluster. Position 446 (glutamate 446) interacts with Mg(2+). Serine 472 serves as the catalytic Proton acceptor.

It belongs to the IlvD/Edd family. Homodimer. The cofactor is [2Fe-2S] cluster. It depends on Mg(2+) as a cofactor.

The catalysed reaction is (2R)-2,3-dihydroxy-3-methylbutanoate = 3-methyl-2-oxobutanoate + H2O. It catalyses the reaction (2R,3R)-2,3-dihydroxy-3-methylpentanoate = (S)-3-methyl-2-oxopentanoate + H2O. It functions in the pathway amino-acid biosynthesis; L-isoleucine biosynthesis; L-isoleucine from 2-oxobutanoate: step 3/4. It participates in amino-acid biosynthesis; L-valine biosynthesis; L-valine from pyruvate: step 3/4. Functionally, functions in the biosynthesis of branched-chain amino acids. Catalyzes the dehydration of (2R,3R)-2,3-dihydroxy-3-methylpentanoate (2,3-dihydroxy-3-methylvalerate) into 2-oxo-3-methylpentanoate (2-oxo-3-methylvalerate) and of (2R)-2,3-dihydroxy-3-methylbutanoate (2,3-dihydroxyisovalerate) into 2-oxo-3-methylbutanoate (2-oxoisovalerate), the penultimate precursor to L-isoleucine and L-valine, respectively. The sequence is that of Dihydroxy-acid dehydratase from Anaeromyxobacter sp. (strain K).